The chain runs to 243 residues: Orotidine 5'-phosphate decarboxylase (243 aa).

Residues D18, K39, 66 to 75 (DLKFHDIPAT), T130, R192, Q201, G221, and R222 contribute to the substrate site. K68 functions as the Proton donor in the catalytic mechanism.

It belongs to the OMP decarboxylase family. Type 1 subfamily. Homodimer.

The enzyme catalyses orotidine 5'-phosphate + H(+) = UMP + CO2. It functions in the pathway pyrimidine metabolism; UMP biosynthesis via de novo pathway; UMP from orotate: step 2/2. Functionally, catalyzes the decarboxylation of orotidine 5'-monophosphate (OMP) to uridine 5'-monophosphate (UMP). The protein is Orotidine 5'-phosphate decarboxylase of Synechococcus sp. (strain CC9902).